A 273-amino-acid chain; its full sequence is Tyrosinase (273 aa).

The N-terminal stretch at 1 to 18 (MLLFTMGLLLAILQPSTG) is a signal peptide. 3 N-linked (GlcNAc...) asparagine glycosylation sites follow: Asn-86, Asn-111, and Asn-161. Positions 180, 202, and 211 each coordinate Cu cation. N-linked (GlcNAc...) asparagine glycosylation occurs at Asn-230.

This sequence belongs to the tyrosinase family. Cu(2+) serves as cofactor.

It localises to the melanosome membrane. The protein localises to the melanosome. It catalyses the reaction 2 L-dopa + O2 = 2 L-dopaquinone + 2 H2O. The enzyme catalyses L-tyrosine + O2 = L-dopaquinone + H2O. Its function is as follows. This is a copper-containing oxidase that functions in the formation of pigments such as melanins and other polyphenolic compounds. Catalyzes the initial and rate limiting step in the cascade of reactions leading to melanin production from tyrosine. In addition to hydroxylating tyrosine to DOPA (3,4-dihydroxyphenylalanine), also catalyzes the oxidation of DOPA to DOPA-quinone, and possibly the oxidation of DHI (5,6-dihydroxyindole) to indole-5,6 quinone. This is Tyrosinase (TYR) from Coturnix japonica (Japanese quail).